The sequence spans 304 residues: UDP-3-O-acyl-N-acetylglucosamine deacetylase (304 aa).

3 residues coordinate Zn(2+): H79, H238, and D242. The active-site Proton donor is the H265.

Belongs to the LpxC family. Zn(2+) is required as a cofactor.

It catalyses the reaction a UDP-3-O-[(3R)-3-hydroxyacyl]-N-acetyl-alpha-D-glucosamine + H2O = a UDP-3-O-[(3R)-3-hydroxyacyl]-alpha-D-glucosamine + acetate. Its pathway is glycolipid biosynthesis; lipid IV(A) biosynthesis; lipid IV(A) from (3R)-3-hydroxytetradecanoyl-[acyl-carrier-protein] and UDP-N-acetyl-alpha-D-glucosamine: step 2/6. Functionally, catalyzes the hydrolysis of UDP-3-O-myristoyl-N-acetylglucosamine to form UDP-3-O-myristoylglucosamine and acetate, the committed step in lipid A biosynthesis. In Pseudoalteromonas atlantica (strain T6c / ATCC BAA-1087), this protein is UDP-3-O-acyl-N-acetylglucosamine deacetylase.